We begin with the raw amino-acid sequence, 153 residues long: Transcriptional repressor NrdR (153 aa).

A zinc finger lies at 3 to 34; it reads CPFCAHDDSQVKDSRPAEDNAAIRRRRQCSKC. Positions 49-139 constitute an ATP-cone domain; that stretch reads VTVVKSDDKR…VYRDFSEARD (91 aa).

Belongs to the NrdR family. The cofactor is Zn(2+).

In terms of biological role, negatively regulates transcription of bacterial ribonucleotide reductase nrd genes and operons by binding to NrdR-boxes. The protein is Transcriptional repressor NrdR of Erythrobacter litoralis (strain HTCC2594).